The chain runs to 207 residues: MSPPDPQQRRIGILGGTFNPVHHGHLIMAEQALWQFNLDQVLWMPAGDPPHKPLAAGASKADRLAMVKLAIADHERFACSDLEIRRPGPSYTIETLRSLMQEQPDTQWYWIIGVDALRDLPQWYQAEELARLCHWIVAPRIDAGDAAQVLRSVAAKLPIRAAILDAPTLTLSSTYLRQQIQKGGSIRYLVPPAVEHYIRQHRLYLDP.

This sequence belongs to the NadD family.

The catalysed reaction is nicotinate beta-D-ribonucleotide + ATP + H(+) = deamido-NAD(+) + diphosphate. The protein operates within cofactor biosynthesis; NAD(+) biosynthesis; deamido-NAD(+) from nicotinate D-ribonucleotide: step 1/1. Functionally, catalyzes the reversible adenylation of nicotinate mononucleotide (NaMN) to nicotinic acid adenine dinucleotide (NaAD). This Synechococcus sp. (strain JA-3-3Ab) (Cyanobacteria bacterium Yellowstone A-Prime) protein is Probable nicotinate-nucleotide adenylyltransferase.